A 989-amino-acid chain; its full sequence is Putative transcription elongation factor SPT5 homolog 2 (989 aa).

A compositionally biased stretch (acidic residues) spans 1 to 26 (MSQYSDDDYSHEDDSEMEDEDEEDEY). Residues 1-82 (MSQYSDDDYS…VEDDDDDVDV (82 aa)) form a disordered region. Basic residues predominate over residues 31 to 42 (SRKGRSGKKRGR). The span at 65–82 (WEVEVDDDVEDDDDDVDV) shows a compositional bias: acidic residues. 5 KOW domains span residues 260–287 (DLSR…VDNV), 412–439 (HFMK…VDEE), 464–491 (YFEP…VDQH), 588–615 (VVAV…IYKG), and 683–710 (DHLV…VKDK). Residues 790-852 (MSPPRDNWED…SPMTPSSTSY (63 aa)) form a disordered region. Residues 842-852 (PSPMTPSSTSY) show a composition bias toward low complexity. One can recognise a KOW 6 domain in the interval 936–963 (CPKKNERVKILGGKYCGSTAKVIGEDGQ).

This sequence belongs to the SPT5 family.

It is found in the nucleus. Functionally, may regulate transcription elongation by RNA polymerase II. May enhance transcriptional pausing at sites proximal to the promoter, which may in turn facilitate the assembly of an elongation competent RNA polymerase II complex. In Arabidopsis thaliana (Mouse-ear cress), this protein is Putative transcription elongation factor SPT5 homolog 2.